Reading from the N-terminus, the 348-residue chain is UDP-rhamnose/UDP-galactose transporter 2 (348 aa).

The next 10 membrane-spanning stretches (helical) occupy residues 12–32 (AVSD…IIMA), 44–64 (FSFA…VGMV), 81–101 (LLWF…SLML), 104–124 (VGFY…MEWV), 133–153 (EVKA…VTDV), 160–180 (FICA…IGSL), 196–216 (APIQ…FLSG), 230–250 (LCIL…YLCI), 257–277 (SFQV…WLIF), and 286–306 (IAGM…VELE).

Belongs to the TPT transporter family. TPT (TC 2.A.7.9) subfamily.

It is found in the golgi apparatus membrane. In terms of biological role, nucleotide-sugar transporter that transports UDP-rhamnose or UDP-galactose and UMP in a strict counter-exchange mode. The protein is UDP-rhamnose/UDP-galactose transporter 2 of Arabidopsis thaliana (Mouse-ear cress).